Consider the following 2067-residue polypeptide: Dedicator of cytokinesis protein 11 (2067 aa).

The PH domain occupies 162 to 269 (GVMKQGWLQK…WVNTIKQALL (108 aa)). A disordered region spans residues 274 to 302 (DRRNGSETSEGSLDDDSSSQGKPESITES). The segment covering 291–302 (SSQGKPESITES) has biased composition (polar residues). The C2 DOCK-type domain maps to 643–820 (NNHLYIYPQQ…PLFKVRAYVA (178 aa)). Positions 1224–1267 (SSTIVDKEPSGSVTQNGLSRRGESRGSMYGDPGTPDINELHRRG) are disordered. The region spanning 1614–2040 (RSYASTPELR…LSEIIHEQIF (427 aa)) is the DOCKER domain.

This sequence belongs to the DOCK family.

Guanine nucleotide-exchange factor (GEF) that activates CDC42 by exchanging bound GDP for free GTP. This is Dedicator of cytokinesis protein 11 from Danio rerio (Zebrafish).